A 322-amino-acid chain; its full sequence is Ferrochelatase (322 aa).

Positions 194 and 275 each coordinate Fe cation.

Belongs to the ferrochelatase family.

It localises to the cytoplasm. The catalysed reaction is heme b + 2 H(+) = protoporphyrin IX + Fe(2+). It participates in porphyrin-containing compound metabolism; protoheme biosynthesis; protoheme from protoporphyrin-IX: step 1/1. Functionally, catalyzes the ferrous insertion into protoporphyrin IX. The chain is Ferrochelatase from Proteus mirabilis (strain HI4320).